Consider the following 128-residue polypeptide: MLTYAPLNFIAIGIGATLGAWLRWVLGLRLNGAGWPWGTLTANLVGGYLIGVMVALIASHPEWPAWIRLAAVTGFLGGLTTFSTFSAETVDMLERGVYATAAAYAGASLAGSLAMTGLGLATVRLLLR.

The next 4 helical transmembrane spans lie at 7–29, 36–57, 65–94, and 98–126; these read LNFI…LGLR, PWGT…VALI, AWIR…DMLE, and YATA…VRLL. Asn-43 is a binding site for fluoride. The Na(+) site is built by Gly-77 and Thr-80. 3 residues coordinate fluoride: Tyr-104, Ser-108, and Ser-112.

It belongs to the fluoride channel Fluc/FEX (TC 1.A.43) family. In terms of assembly, homodimer.

The protein resides in the cell inner membrane. The catalysed reaction is fluoride(in) = fluoride(out). Its activity is regulated as follows. Na(+) is not transported, but it plays an essential structural role and its presence is essential for fluoride channel function. The Na(+)-binding site is specific for Na(+) over most other cations including K(+) and Mg(2+). Fluoride efflux is inhibited by Li(2+). Functionally, fluoride-specific ion channel. Important for reducing fluoride concentration in the cell, thus reducing its toxicity. Is highly specific for fluoride ions and cannot transport chloride ions. In Bordetella pertussis (strain Tohama I / ATCC BAA-589 / NCTC 13251), this protein is Fluoride-specific ion channel FluC.